Consider the following 500-residue polypeptide: Glycerol kinase (500 aa).

Threonine 13 contacts ADP. 3 residues coordinate ATP: threonine 13, threonine 14, and serine 15. A sn-glycerol 3-phosphate-binding site is contributed by threonine 13. ADP is bound at residue arginine 17. Sn-glycerol 3-phosphate-binding residues include arginine 83, glutamate 84, tyrosine 136, and aspartate 246. Glycerol is bound by residues arginine 83, glutamate 84, tyrosine 136, aspartate 246, and glutamine 247. ADP is bound by residues threonine 268 and glycine 311. Residues threonine 268, glycine 311, glutamine 315, and glycine 412 each contribute to the ATP site. Glycine 412 and asparagine 416 together coordinate ADP.

It belongs to the FGGY kinase family.

It carries out the reaction glycerol + ATP = sn-glycerol 3-phosphate + ADP + H(+). It participates in polyol metabolism; glycerol degradation via glycerol kinase pathway; sn-glycerol 3-phosphate from glycerol: step 1/1. Inhibited by fructose 1,6-bisphosphate (FBP). In terms of biological role, key enzyme in the regulation of glycerol uptake and metabolism. Catalyzes the phosphorylation of glycerol to yield sn-glycerol 3-phosphate. This Francisella tularensis subsp. novicida (strain U112) protein is Glycerol kinase.